A 205-amino-acid polypeptide reads, in one-letter code: Glycerol-3-phosphate acyltransferase (205 aa).

Topologically, residues 1 to 3 are periplasmic; that stretch reads MSA. Residues 4-24 form a helical membrane-spanning segment; it reads IAPGMILFAYLCGSISSAILV. The Cytoplasmic portion of the chain corresponds to 25–52; that stretch reads CRLCGLPDPRTSGSGNPGATNVLRMGGK. A helical membrane pass occupies residues 53-73; the sequence is GAALAVLIFDVLKGMLPVWGA. Over 74-80 the chain is Periplasmic; it reads YELGVSP. A helical transmembrane segment spans residues 81–101; the sequence is FWLGLIAIAACLGHIWPIFFG. Over 102–111 the chain is Cytoplasmic; it reads FKGGKGVATA. Residues 112–132 form a helical membrane-spanning segment; it reads FGAIAPIGWDLTGVMAGTWLL. Over 133–137 the chain is Periplasmic; that stretch reads TVLLS. A helical membrane pass occupies residues 138–158; it reads GYSSLGAIVSALIAPFYVWWF. Residues 159–205 lie on the Cytoplasmic side of the membrane; the sequence is KPQFTFPVSMLSCLILLRHHDNIQRLWRRQETKIWTKLKRKREKDPE.

This sequence belongs to the PlsY family. As to quaternary structure, probably interacts with PlsX.

The protein localises to the cell inner membrane. It catalyses the reaction sn-glycerol 3-phosphate + an acyl-CoA = a 1-acyl-sn-glycero-3-phosphate + CoA. The enzyme catalyses a fatty acyl-[ACP] + sn-glycerol 3-phosphate = a 1-acyl-sn-glycero-3-phosphate + holo-[ACP]. It participates in lipid metabolism; phospholipid metabolism. Functionally, catalyzes the transfer of an acyl group from acyl-ACP to glycerol-3-phosphate (G3P) to form lysophosphatidic acid (LPA). This enzyme can also utilize acyl-CoA as fatty acyl donor, but not acyl-PO(4). The polypeptide is Glycerol-3-phosphate acyltransferase (Escherichia fergusonii (strain ATCC 35469 / DSM 13698 / CCUG 18766 / IAM 14443 / JCM 21226 / LMG 7866 / NBRC 102419 / NCTC 12128 / CDC 0568-73)).